Here is a 78-residue protein sequence, read N- to C-terminus: DNA-directed RNA polymerase subunit omega (78 aa).

The protein belongs to the RNA polymerase subunit omega family. In cyanobacteria the RNAP catalytic core is composed of 2 alpha, 1 beta, 1 beta', 1 gamma and 1 omega subunit. When a sigma factor is associated with the core the holoenzyme is formed, which can initiate transcription.

The enzyme catalyses RNA(n) + a ribonucleoside 5'-triphosphate = RNA(n+1) + diphosphate. Promotes RNA polymerase assembly. Latches the N- and C-terminal regions of the beta' subunit thereby facilitating its interaction with the beta and alpha subunits. The sequence is that of DNA-directed RNA polymerase subunit omega from Prochlorococcus marinus subsp. pastoris (strain CCMP1986 / NIES-2087 / MED4).